The chain runs to 431 residues: tRNA(Ile)-lysidine synthase (431 aa).

Position 26-31 (26-31 (SGGVDS)) interacts with ATP.

This sequence belongs to the tRNA(Ile)-lysidine synthase family.

Its subcellular location is the cytoplasm. It carries out the reaction cytidine(34) in tRNA(Ile2) + L-lysine + ATP = lysidine(34) in tRNA(Ile2) + AMP + diphosphate + H(+). Its function is as follows. Ligates lysine onto the cytidine present at position 34 of the AUA codon-specific tRNA(Ile) that contains the anticodon CAU, in an ATP-dependent manner. Cytidine is converted to lysidine, thus changing the amino acid specificity of the tRNA from methionine to isoleucine. This Wolbachia pipientis wMel protein is tRNA(Ile)-lysidine synthase.